The following is a 601-amino-acid chain: Putative pentatricopeptide repeat-containing protein At3g25060, mitochondrial (601 aa).

The transit peptide at 1–80 (MVQTKHFCML…KVFDELPQRG (80 aa)) directs the protein to the mitochondrion. 13 PPR repeats span residues 49–79 (GSSISRDLIASCGRIGEISYARKVFDELPQR), 80–114 (GVSVYNSMIVVYSRGKNPDEVLRLYDQMIAEKIQP), 115–149 (DSSTFTMTIKACLSGLVLEKGEAVWCKAVDFGYKN), 150–180 (DVFVCSSVLNLYMKCGKMDEAEVLFGKMAKR), 181–215 (DVICWTTMVTGFAQAGKSLKAVEFYREMQNEGFGR), 216–250 (DRVVMLGLLQASGDLGDTKMGRSVHGYLYRTGLPM), 251–281 (NVVVETSLVDMYAKVGFIEVASRVFSRMMFK), 282–316 (TAVSWGSLISGFAQNGLANKAFEAVVEMQSLGFQP), 317–347 (DLVTLVGVLVACSQVGSLKTGRLVHCYILKR), 351–381 (DRVTATALMDMYSKCGALSSSREIFEHVGRK), 382–416 (DLVCWNTMISCYGIHGNGQEVVSLFLKMTESNIEP), 417–452 (DHATFASLLSALSHSGLVEQGQHWFSVMINKYKIQP), and 453–487 (SEKHYVCLIDLLARAGRVEEALDMINSEKLDNALP). The tract at residues 488-563 (IWVALLSGCI…VPGYSAIEVN (76 aa)) is type E motif. Residues 564-594 (GELRTFLMEDLSHHEHYHMLQVLRNLKTEIR) form a type E(+) motif region.

The protein belongs to the PPR family. PCMP-E subfamily.

It localises to the mitochondrion. The sequence is that of Putative pentatricopeptide repeat-containing protein At3g25060, mitochondrial (PCMP-E96) from Arabidopsis thaliana (Mouse-ear cress).